The primary structure comprises 514 residues: MAMAAAAAVASQGLLATSSQQQKKSSAKLICNAATFFSGKRLLWVKSCNNGAVGLRASGVRCEAQAIEREAVKADAGNSREEDAFSGLKQVCAVLGTQWGDEGKGKLVDILAQRFDVVARCQGGANAGHTIYNDKGEKFALHLVPSGILNEKTTCVVGNGVVIHLPGFFKEIDNLESKGVNTNGRLLVSDRAHLLFNLHQEVDGLREAELAGQMIGTTKRGIGPCYASKAIRNGIRVSDLRHLDTFREKLDILYRDAAARFKDFEYSSDEVNAEMEKYVKYAERLEPYIVDTVDYVNAAIAEGKRILIEGGQATMLDIDFGTYPFVTSSNPSVGGICTGLGVAPNRLGDIVGVAKAYTSRVGSGPYPTELFGEEGDELRKAGFEWGTTTGRPRRCGWLDIVALNFVCTINGFTAINLTKLDVLSGLPEVKLGIAYKTPSGEKLRAFPADLSILEQVEVEYEILEGWKEDITKVRSYDELPAAAQRYVERIEELIGLPCQYIGVGPGRDALIVKQ.

The transit peptide at 1–56 directs the protein to the chloroplast; that stretch reads MAMAAAAAVASQGLLATSSQQQKKSSAKLICNAATFFSGKRLLWVKSCNNGAVGLR. GTP is bound by residues 100 to 106 and 128 to 130; these read GDEGKGK and GHT. The Proton acceptor role is filled by Asp-101. Positions 101 and 128 each coordinate Mg(2+). IMP contacts are provided by residues 101–104, 126–129, Thr-218, Arg-232, Gln-312, Thr-327, and Arg-391; these read DEGK and NAGH. The active-site Proton donor is His-129. Residue 387 to 393 participates in substrate binding; sequence TTTGRPR. GTP contacts are provided by residues Arg-393, 419-421, and 502-504; these read KLD and GVG.

It belongs to the adenylosuccinate synthetase family. Homodimer. Mg(2+) serves as cofactor.

The protein localises to the plastid. Its subcellular location is the chloroplast. It catalyses the reaction IMP + L-aspartate + GTP = N(6)-(1,2-dicarboxyethyl)-AMP + GDP + phosphate + 2 H(+). It functions in the pathway purine metabolism; AMP biosynthesis via de novo pathway; AMP from IMP: step 1/2. Its function is as follows. Plays an important role in the de novo pathway and in the salvage pathway of purine nucleotide biosynthesis. Catalyzes the first committed step in the biosynthesis of AMP from IMP. This chain is Adenylosuccinate synthetase 2, chloroplastic, found in Physcomitrium patens (Spreading-leaved earth moss).